We begin with the raw amino-acid sequence, 552 residues long: Arginine--tRNA ligase (552 aa).

Positions 130-140 (ANPTGPLSIGH) match the 'HIGH' region motif.

It belongs to the class-I aminoacyl-tRNA synthetase family. Monomer.

It is found in the cytoplasm. The enzyme catalyses tRNA(Arg) + L-arginine + ATP = L-arginyl-tRNA(Arg) + AMP + diphosphate. The sequence is that of Arginine--tRNA ligase from Desulfotalea psychrophila (strain LSv54 / DSM 12343).